We begin with the raw amino-acid sequence, 380 residues long: Glycerate kinase (380 aa).

This sequence belongs to the glycerate kinase type-1 family.

The enzyme catalyses (R)-glycerate + ATP = (2R)-3-phosphoglycerate + ADP + H(+). This is Glycerate kinase (glxK) from Halalkalibacterium halodurans (strain ATCC BAA-125 / DSM 18197 / FERM 7344 / JCM 9153 / C-125) (Bacillus halodurans).